Here is a 1838-residue protein sequence, read N- to C-terminus: Nuclear pore complex protein NUP205 (1838 aa).

The protein belongs to the NUP186/NUP192/NUP205 family. In terms of assembly, part of the nuclear pore complex (NPC). The NPC has an eight-fold symmetrical structure comprising a central transport channel and two rings, the cytoplasmic and nuclear rings, to which eight filaments are attached. The cytoplasmic filaments have loose ends, while the nuclear filaments are joined in a distal ring, forming a nuclear basket. NPCs are highly dynamic in configuration and composition, and can be devided in 3 subcomplexes, the NUP62 subcomplex, the NUP107-160 subcomplex and the NUP93 subcomplex, containing approximately 30 different nucleoporin proteins.

It is found in the nucleus envelope. The protein localises to the nucleus. Its subcellular location is the nuclear pore complex. The sequence is that of Nuclear pore complex protein NUP205 from Arabidopsis thaliana (Mouse-ear cress).